Here is a 186-residue protein sequence, read N- to C-terminus: MSKKSRISITHLLNPIQEENLKEKLQEINNQLISLCSSLPKRQSLPGPSSDILRFLSRNNLDPQEIGLIKTTYRLSTLLSKLREHEIVFNVVTKDHLLKKGVPNHYAASYRGHRFTRENVQILETWYRNHIDNPYLDHNSQQYLAQKTNLSKIQIKNWVANRRRKQKSIYISPFRPTLMAQNSLDT.

The homeobox; TALE-type DNA-binding region spans 108 to 170 (ASYRGHRFTR…NRRRKQKSIY (63 aa)).

Belongs to the TALE/M-ATYP homeobox family.

The protein resides in the nucleus. Its function is as follows. Mating type proteins are sequence specific DNA-binding proteins that act as master switches in yeast differentiation by controlling gene expression in a cell type-specific fashion. The chain is Mating-type-like protein ALPHA2 (MTL1ALPHA2) from Candida glabrata (strain ATCC 2001 / BCRC 20586 / JCM 3761 / NBRC 0622 / NRRL Y-65 / CBS 138) (Yeast).